The following is a 203-amino-acid chain: MSIKLTATTRTDLGKGASRRLRHADLVPAIVYGADKEAVSLTFTHKDIIKAEGIEAFYSSVLDLEIDGVSEQVVLKDLQRHAFKARIQHLDLLRVDAKHKLHTTVPLHFINEGLSEAIKNGGIVYRTINEVEVLCLPKDLPSFIEVDISTMEIGDTLHLSNITLPAGVESVELNKGEEHDLPMVSIALSKKAPAEEIEAETAE.

It belongs to the bacterial ribosomal protein bL25 family. CTC subfamily. As to quaternary structure, part of the 50S ribosomal subunit; part of the 5S rRNA/L5/L18/L25 subcomplex. Contacts the 5S rRNA. Binds to the 5S rRNA independently of L5 and L18.

This is one of the proteins that binds to the 5S RNA in the ribosome where it forms part of the central protuberance. The polypeptide is Large ribosomal subunit protein bL25 (Psychromonas ingrahamii (strain DSM 17664 / CCUG 51855 / 37)).